A 613-amino-acid polypeptide reads, in one-letter code: Histone acetyltransferase KAT7 (613 aa).

Positions 1–175 (MAIGVVKRNA…SDLSHRPKRR (175 aa)) are disordered. A phosphoserine mark is found at S12, S52, S55, S59, and S66. A compositionally biased stretch (low complexity) spans 44–59 (VTRSSARLSQSSQDSS). 2 positions are modified to phosphothreonine: T87 and T90. Over residues 98–107 (QTRSSGSETE) the composition is skewed to polar residues. The residue at position 104 (S104) is a Phosphoserine. T106 is modified (phosphothreonine). Over residues 112 to 127 (FSDRETKNTADHDESP) the composition is skewed to basic and acidic residues. Residues S113 and S126 each carry the phosphoserine modification. T130 is subject to Phosphothreonine. Residues 136-147 (PSSESDIDISSP) show a composition bias toward low complexity. The segment covering 150–170 (SHDESIAKDMSLKDSGSDLSH) has biased composition (basic and acidic residues). A phosphoserine mark is found at S160, S164, S166, and S180. The CCHHC-type zinc-finger motif lies at 178–221 (HESYNFNMKCPTPGCNSLGHLTGKHERHFSISGCPLYHNLSADE). K201 and K279 each carry N6-acetyllysine. K325 is covalently cross-linked (Glycyl lysine isopeptide (Lys-Gly) (interchain with G-Cter in SUMO2)). The region spanning 334-609 (EGSNMIKTIA…MDPSCLKWTP (276 aa)) is the MYST-type HAT domain. K340 is covalently cross-linked (Glycyl lysine isopeptide (Lys-Gly) (interchain with G-Cter in ubiquitin)). The C2HC MYST-type zinc finger occupies 367–392 (LYMCEFCLKYMKSQTILRRHMAKCVW). C370, C373, H386, and C390 together coordinate Zn(2+). K434 is subject to N6-acetyllysine; by autocatalysis. Acetyl-CoA-binding positions include 477-479 (ILT) and 485-490 (RQGYGK). S508 bears the Phosphoserine mark. E510 (proton donor/acceptor) is an active-site residue. Acetyl-CoA-binding residues include S514 and S523.

The protein belongs to the MYST (SAS/MOZ) family. As to quaternary structure, component of the HBO1 complex composed of KAT7/HBO1, MEAF6, ING4 or ING5, and one scaffold subunit: complexes containing BRPF scaffold (BRPF1, BRD1/BRPF2 or BRPF3) direct KAT7/HBO1 specificity towards H3K14ac, while complexes containing JADE scaffold (JADE1, JADE2 and JADE3) mediate acetylation of histone H4. Interacts with MCM2 and ORC1. Interacts with the androgen receptor (AR) in the presence of dihydrotestosterone. Interacts with CDT1. Interacts with MAP2K1 and CUL1. Interacts with p53/TP53; leading to inhibit histone acetyltransferase activity. Post-translationally, phosphorylated at Ser-52 and Ser-55 by ATR in response to DNA damage, promoting its ubiquitination by the CRL4(DDB2) complex and subsequent degradation. Phosphorylation at Ser-52 and Ser-55 by ATR in response to ultraviolet-induced DNA, promotes localization to DNA damage sites. Phosphorylation at Ser-59 by PLK1 during mitosis seems important for prereplicative complex formation and DNA replication licensing, and requires prior phosphorylation at Thr-87 and Thr-90 by CDK1. Phosphorylated by MAP2K1, which accelerates its degradation. Ubiquitinated at Lys-340, leading to proteasomal degradation. Ubiquitinated by the CRL4(DDB2) complex following phosphorylation by ATR, leading to its subsequent degradation. In terms of processing, autoacetylation at Lys-434 is required for proper function. Widely expressed in adult tissues.

It localises to the nucleus. The protein localises to the chromosome. It is found in the centromere. The protein resides in the cytoplasm. Its subcellular location is the cytosol. The enzyme catalyses L-lysyl-[protein] + acetyl-CoA = N(6)-acetyl-L-lysyl-[protein] + CoA + H(+). Its activity is regulated as follows. Histone acetyltransferase activity is inhibited by GMNN in the context of a complex with CDT1, inhibiting histone H4 acetylation and DNA replication licensing. Its function is as follows. Catalytic subunit of histone acetyltransferase HBO1 complexes, which specifically mediate acetylation of histone H3 at 'Lys-14' (H3K14ac), thereby regulating various processes, such as gene transcription, protein ubiquitination, immune regulation, stem cell pluripotent and self-renewal maintenance and embryonic development. Some complexes also catalyze acetylation of histone H4 at 'Lys-5', 'Lys-8' and 'Lys-12' (H4K5ac, H4K8ac and H4K12ac, respectively), regulating DNA replication initiation, regulating DNA replication initiation. Specificity of the HBO1 complexes is determined by the scaffold subunit: complexes containing BRPF scaffold (BRPF1, BRD1/BRPF2 or BRPF3) direct KAT7/HBO1 specificity towards H3K14ac, while complexes containing JADE (JADE1, JADE2 and JADE3) scaffold direct KAT7/HBO1 specificity towards histone H4. H3K14ac promotes transcriptional elongation by facilitating the processivity of RNA polymerase II. Acts as a key regulator of hematopoiesis by forming a complex with BRD1/BRPF2, directing KAT7/HBO1 specificity towards H3K14ac and promoting erythroid differentiation. H3K14ac is also required for T-cell development. KAT7/HBO1-mediated acetylation facilitates two consecutive steps, licensing and activation, in DNA replication initiation: H3K14ac facilitates the activation of replication origins, and histone H4 acetylation (H4K5ac, H4K8ac and H4K12ac) facilitates chromatin loading of MCM complexes, promoting DNA replication licensing. Acts as a positive regulator of centromeric CENPA assembly: recruited to centromeres and mediates histone acetylation, thereby preventing centromere inactivation mediated by SUV39H1, possibly by increasing histone turnover/exchange. Involved in nucleotide excision repair: phosphorylation by ATR in response to ultraviolet irradiation promotes its localization to DNA damage sites, where it mediates histone acetylation to facilitate recruitment of XPC at the damaged DNA sites. Acts as an inhibitor of NF-kappa-B independently of its histone acetyltransferase activity. Functionally, plays a central role in the maintenance of leukemia stem cells in acute myeloid leukemia (AML). Acts by mediating acetylation of histone H3 at 'Lys-14' (H3K14ac), thereby facilitating the processivity of RNA polymerase II to maintain the high expression of key genes, such as HOXA9 and HOXA10 that help to sustain the functional properties of leukemia stem cells. This chain is Histone acetyltransferase KAT7, found in Mus musculus (Mouse).